The sequence spans 106 residues: MGPVLVWNISDLIGMNFTCLKGLATLFKTGASIGISLGAGAECSTIIACNLGSWFFKISLAIVQRLPLGMQCRICSFRNARQGGNIPELALIIICTFIYFLYFSLF.

The next 2 membrane-spanning stretches (helical) occupy residues 43–63 (CSTI…LAIV) and 86–106 (IPEL…FSLF).

It localises to the membrane. This is an uncharacterized protein from Saccharomyces cerevisiae (strain ATCC 204508 / S288c) (Baker's yeast).